We begin with the raw amino-acid sequence, 191 residues long: MNIILLGPPGAGKGTQAGILVKDRGMVQLSTGDMLRAARTSGTEMGNLVAGVMDRGELVTDEIVIGLIREQLEAGGSGFIFDGFPRTLAQADALADLLAEVGQTLDHVIAMEVNDEALVGRIVNRAKEAAAAGQPVRADDNEESLKIRLMEYYKKTSPLLGYYHAKEQLRWVPGLGAIDDVAKGIADVLDA.

An ATP-binding site is contributed by 10-15 (GAGKGT). Residues 30-59 (STGDMLRAARTSGTEMGNLVAGVMDRGELV) are NMP. AMP is bound by residues Thr-31, Arg-36, 57–59 (ELV), 83–86 (GFPR), and Gln-90. The segment at 124-140 (NRAKEAAAAGQPVRADD) is LID. Residue Arg-125 participates in ATP binding. Residues Arg-137 and Arg-148 each coordinate AMP. Gly-176 is an ATP binding site.

Belongs to the adenylate kinase family. Monomer.

It localises to the cytoplasm. It catalyses the reaction AMP + ATP = 2 ADP. The protein operates within purine metabolism; AMP biosynthesis via salvage pathway; AMP from ADP: step 1/1. Functionally, catalyzes the reversible transfer of the terminal phosphate group between ATP and AMP. Plays an important role in cellular energy homeostasis and in adenine nucleotide metabolism. The protein is Adenylate kinase of Jannaschia sp. (strain CCS1).